Reading from the N-terminus, the 288-residue chain is Diaminopimelate epimerase (288 aa).

Substrate contacts are provided by N14 and N67. The active-site Proton donor is C76. Residues 77-78, N166, N199, and 217-218 contribute to the substrate site; these read GN and ER. C226 functions as the Proton acceptor in the catalytic mechanism. 227–228 contributes to the substrate binding site; that stretch reads GT.

The protein belongs to the diaminopimelate epimerase family. Homodimer.

Its subcellular location is the cytoplasm. It carries out the reaction (2S,6S)-2,6-diaminopimelate = meso-2,6-diaminopimelate. Its pathway is amino-acid biosynthesis; L-lysine biosynthesis via DAP pathway; DL-2,6-diaminopimelate from LL-2,6-diaminopimelate: step 1/1. In terms of biological role, catalyzes the stereoinversion of LL-2,6-diaminopimelate (L,L-DAP) to meso-diaminopimelate (meso-DAP), a precursor of L-lysine and an essential component of the bacterial peptidoglycan. The sequence is that of Diaminopimelate epimerase from Bacillus cytotoxicus (strain DSM 22905 / CIP 110041 / 391-98 / NVH 391-98).